Consider the following 491-residue polypeptide: bZIP transcription factor hapX (491 aa).

The segment at 19-73 (AKPAISPSPGPGTPGSITSKEWVIPPRPKPGRKPATDTPPTKRKAQNRAAQRAFR) is disordered. A bZIP domain is found at 55-95 (DTPPTKRKAQNRAAQRAFRERRAARVNELEEQIKKIEDEHE). The tract at residues 60-79 (KRKAQNRAAQRAFRERRAAR) is basic motif. The interval 83 to 90 (LEEQIKKI) is leucine-zipper. Positions 149–161 (SSLSDREAVRSDK) are enriched in basic and acidic residues. 3 disordered regions span residues 149–196 (SSLS…REEV), 224–245 (EQSRRLDTTKPGLSEPQIKPDP), and 397–416 (VSRGRSGSNNNTSSGSSAAP). Over residues 397–413 (VSRGRSGSNNNTSSGSS) the composition is skewed to low complexity.

The protein belongs to the bZIP family. YAP subfamily.

Its subcellular location is the nucleus. Its function is as follows. Transcription factor required for repression of genes during iron starvation. Represses iron-dependent and mitochondrial-localized activities including respiration, TCA cycle, amino acid metabolism, iron-sulfur-cluster and heme biosynthesis. Iron starvation causes a massive remodeling of the amino acid pool and hapX is essential for the coordination of the production of siderophores and their precursor ornithine. The sequence is that of bZIP transcription factor hapX from Aspergillus fumigatus (strain ATCC MYA-4609 / CBS 101355 / FGSC A1100 / Af293) (Neosartorya fumigata).